The chain runs to 507 residues: Ribosomal protein uS12 methylthiotransferase RimO (507 aa).

In terms of domain architecture, MTTase N-terminal spans R13 to A124. 6 residues coordinate [4Fe-4S] cluster: C22, C58, C87, C205, C209, and C212. The Radical SAM core domain occupies L191–R422. A TRAM domain is found at E424–A497.

Belongs to the methylthiotransferase family. RimO subfamily. [4Fe-4S] cluster serves as cofactor.

It is found in the cytoplasm. It carries out the reaction L-aspartate(89)-[ribosomal protein uS12]-hydrogen + (sulfur carrier)-SH + AH2 + 2 S-adenosyl-L-methionine = 3-methylsulfanyl-L-aspartate(89)-[ribosomal protein uS12]-hydrogen + (sulfur carrier)-H + 5'-deoxyadenosine + L-methionine + A + S-adenosyl-L-homocysteine + 2 H(+). In terms of biological role, catalyzes the methylthiolation of an aspartic acid residue of ribosomal protein uS12. This is Ribosomal protein uS12 methylthiotransferase RimO from Salinispora tropica (strain ATCC BAA-916 / DSM 44818 / JCM 13857 / NBRC 105044 / CNB-440).